Here is a 290-residue protein sequence, read N- to C-terminus: Lipoyl synthase (290 aa).

[4Fe-4S] cluster contacts are provided by cysteine 36, cysteine 41, cysteine 47, cysteine 62, cysteine 66, cysteine 69, and serine 275. Residues 48–264 (FSKKTATFMI…KEEALKIGFS (217 aa)) form the Radical SAM core domain.

Belongs to the radical SAM superfamily. Lipoyl synthase family. The cofactor is [4Fe-4S] cluster.

The protein localises to the cytoplasm. It catalyses the reaction [[Fe-S] cluster scaffold protein carrying a second [4Fe-4S](2+) cluster] + N(6)-octanoyl-L-lysyl-[protein] + 2 oxidized [2Fe-2S]-[ferredoxin] + 2 S-adenosyl-L-methionine + 4 H(+) = [[Fe-S] cluster scaffold protein] + N(6)-[(R)-dihydrolipoyl]-L-lysyl-[protein] + 4 Fe(3+) + 2 hydrogen sulfide + 2 5'-deoxyadenosine + 2 L-methionine + 2 reduced [2Fe-2S]-[ferredoxin]. The protein operates within protein modification; protein lipoylation via endogenous pathway; protein N(6)-(lipoyl)lysine from octanoyl-[acyl-carrier-protein]: step 2/2. In terms of biological role, catalyzes the radical-mediated insertion of two sulfur atoms into the C-6 and C-8 positions of the octanoyl moiety bound to the lipoyl domains of lipoate-dependent enzymes, thereby converting the octanoylated domains into lipoylated derivatives. The sequence is that of Lipoyl synthase from Alkaliphilus metalliredigens (strain QYMF).